The chain runs to 77 residues: Homeodomain-only protein (77 aa).

The homeobox; degenerate DNA-binding region spans 7-65; that stretch reads AALGVRLTEDQVKVLEENFTKVSKHPDETTLMLIAAECGLSEEQTAVWFRMRNAQWRKA.

It is found in the nucleus. The protein localises to the cytoplasm. In terms of biological role, atypical homeodomain protein which does not bind DNA and is required to modulate cardiac growth and development. May act via an interaction with SRF, leading to modulate the expression of SRF-dependent cardiac-specific genes and cardiac development. May act as a co-chaperone for HSPA1A and HSPA1B chaperone proteins and assist in chaperone-mediated protein refolding. The chain is Homeodomain-only protein (hopx) from Danio rerio (Zebrafish).